We begin with the raw amino-acid sequence, 370 residues long: 3-dehydroquinate synthase (370 aa).

Residues 70 to 75 (DAEDGK), 104 to 108 (GAATD), 128 to 129 (TT), lysine 141, lysine 150, and 168 to 171 (TLET) each bind NAD(+). Residues glutamate 183, histidine 246, and histidine 262 each coordinate Zn(2+).

This sequence belongs to the sugar phosphate cyclases superfamily. Dehydroquinate synthase family. It depends on Co(2+) as a cofactor. The cofactor is Zn(2+). NAD(+) is required as a cofactor.

It localises to the cytoplasm. It catalyses the reaction 7-phospho-2-dehydro-3-deoxy-D-arabino-heptonate = 3-dehydroquinate + phosphate. Its pathway is metabolic intermediate biosynthesis; chorismate biosynthesis; chorismate from D-erythrose 4-phosphate and phosphoenolpyruvate: step 2/7. Functionally, catalyzes the conversion of 3-deoxy-D-arabino-heptulosonate 7-phosphate (DAHP) to dehydroquinate (DHQ). The polypeptide is 3-dehydroquinate synthase (Rhodococcus opacus (strain B4)).